Here is a 537-residue protein sequence, read N- to C-terminus: O-phosphoserine--tRNA(Cys) ligase (537 aa).

Residues 186–188, 231–233, 273–274, and Asn-317 each bind substrate; these read HMT, SAS, and YY.

It belongs to the class-II aminoacyl-tRNA synthetase family. O-phosphoseryl-tRNA(Cys) synthetase subfamily. As to quaternary structure, homotetramer. Interacts with SepCysS.

It catalyses the reaction tRNA(Cys) + O-phospho-L-serine + ATP = O-phospho-L-seryl-tRNA(Cys) + AMP + diphosphate. In terms of biological role, catalyzes the attachment of O-phosphoserine (Sep) to tRNA(Cys). The protein is O-phosphoserine--tRNA(Cys) ligase of Methanococcus maripaludis (strain DSM 14266 / JCM 13030 / NBRC 101832 / S2 / LL).